Consider the following 205-residue polypeptide: Basonuclin zinc finger protein homolog (205 aa).

2 consecutive C2H2-type zinc fingers follow at residues 107 to 130 (VACD…SAVH) and 135 to 164 (HTCT…PKLH). Positions 145–168 (QFSSRRSRNRHSSNNNPKLHMPES) are disordered.

As to expression, expressed in the VA and VB motor neurons and at lower levels in the SABV neuron pair.

Its subcellular location is the nucleus. In terms of biological role, probable transcription factor. Involved in motor neuron fate determination and maintenance, acting as a transcriptional repressor to counteract gene activation by transcription factor unc-3 in a subset of motor neurons. Required throughout development to repress transcription by unc-3, probably acting by binding to specific promoter elements. Represses expression of DA and DB motor neuron-specific effector genes, such as unc-129 and unc-53, in VA and VB motor neurons. The protein is Basonuclin zinc finger protein homolog of Caenorhabditis elegans.